Reading from the N-terminus, the 247-residue chain is MPLLLHPAWPLLLGATLTFRALRRVLCRLPLPAHVQTDPLRTWRWHNLLVSFTHSIVSGIWALLCIWQTPEMLVEIETAWSVCGYLLVCFSAGYFIHDTVDIVVSRQTRASWEYLVHHVMAMGAFFSGIFWKRFVGGGVLTLLVEVSNIFLTLRMMMKINNAQDILLYKVNKYVNLVMYFLFRLAPQAYLTKFFLQYAGQRTLGTFLLSILLMLDVMILIYFSRLLRSDFCPERAPSRQQKDKFLTE.

Residues 1–27 (MPLLLHPAWPLLLGATLTFRALRRVLC) form the signal peptide. Residues 28 to 46 (RLPLPAHVQTDPLRTWRWH) lie on the Extracellular side of the membrane. Residues 40-234 (LRTWRWHNLL…LLRSDFCPER (195 aa)) form the TLC domain. Residues 47-67 (NLLVSFTHSIVSGIWALLCIW) form a helical membrane-spanning segment. At 68–83 (QTPEMLVEIETAWSVC) the chain is on the cytoplasmic side. A helical transmembrane segment spans residues 84-104 (GYLLVCFSAGYFIHDTVDIVV). The Extracellular segment spans residues 105 to 123 (SRQTRASWEYLVHHVMAMG). Positions 124 to 144 (AFFSGIFWKRFVGGGVLTLLV) form an intramembrane region, helical. Topologically, residues 145-173 (EVSNIFLTLRMMMKINNAQDILLYKVNKY) are extracellular. A helical transmembrane segment spans residues 174 to 194 (VNLVMYFLFRLAPQAYLTKFF). The Cytoplasmic segment spans residues 195-201 (LQYAGQR). Residues 202–222 (TLGTFLLSILLMLDVMILIYF) form a helical membrane-spanning segment. Residues 223–247 (SRLLRSDFCPERAPSRQQKDKFLTE) are Extracellular-facing.

The protein localises to the cell membrane. Functionally, regulates the composition and fluidity of the plasma membrane. Inhibits the incorporation of membrane-fluidizing phospholipids containing omega-3 long-chain polyunsaturated fatty acids (LCPUFA) and thereby promotes membrane rigidity. Does not appear to have any effect on LCPUFA synthesis. The chain is TLC domain-containing protein 1 (Tlcd1) from Rattus norvegicus (Rat).